We begin with the raw amino-acid sequence, 152 residues long: Small ribosomal subunit protein uS8m (152 aa).

It belongs to the universal ribosomal protein uS8 family.

It localises to the mitochondrion. In Dictyostelium discoideum (Social amoeba), this protein is Small ribosomal subunit protein uS8m (mrps8).